A 337-amino-acid polypeptide reads, in one-letter code: DNA-directed RNA polymerase subunit alpha (337 aa).

Positions 1 to 233 (MVREEVTIST…NLFIPFLHAE (233 aa)) are alpha N-terminal domain (alpha-NTD). An alpha C-terminal domain (alpha-CTD) region spans residues 266-337 (GIALKCIFID…FAMNLPKDFF (72 aa)).

The protein belongs to the RNA polymerase alpha chain family. As to quaternary structure, in plastids the minimal PEP RNA polymerase catalytic core is composed of four subunits: alpha, beta, beta', and beta''. When a (nuclear-encoded) sigma factor is associated with the core the holoenzyme is formed, which can initiate transcription.

Its subcellular location is the plastid. The protein resides in the chloroplast. The enzyme catalyses RNA(n) + a ribonucleoside 5'-triphosphate = RNA(n+1) + diphosphate. In terms of biological role, DNA-dependent RNA polymerase catalyzes the transcription of DNA into RNA using the four ribonucleoside triphosphates as substrates. The polypeptide is DNA-directed RNA polymerase subunit alpha (Ceratophyllum demersum (Rigid hornwort)).